Reading from the N-terminus, the 253-residue chain is Phycoerythrobilin:ferredoxin oxidoreductase (253 aa).

The protein belongs to the HY2 family.

The catalysed reaction is (3Z)-phycoerythrobilin + oxidized 2[4Fe-4S]-[ferredoxin] = 15,16-dihydrobiliverdin + reduced 2[4Fe-4S]-[ferredoxin] + 2 H(+). In terms of biological role, catalyzes the two-electron reduction of the C2 and C3(1) diene system of 15,16-dihydrobiliverdin. The chain is Phycoerythrobilin:ferredoxin oxidoreductase from Prochlorococcus marinus (strain MIT 9301).